A 218-amino-acid polypeptide reads, in one-letter code: MTSLSQEALLVRAALEAEGLETPLVANALNGQQKKEKIEGHMRAIMETLGLDLTDDSLAETPHRIAKMYVNEIFSGLDYSTFPKVTVIENKMKVDEMIMVRDISLTSTCEHHFVTIDGLAHVAYIPRGKVIGLSKINRIVQFFARRPQVQERLTQQILLALQTLLGTKDVAISIKATHFCVKARGVMDSTSYTTTTSLGGVFKTQPDTRAEFLGGLKG.

Positions 109, 112, and 180 each coordinate Zn(2+).

The protein belongs to the GTP cyclohydrolase I family. Toroid-shaped homodecamer, composed of two pentamers of five dimers.

The catalysed reaction is GTP + H2O = 7,8-dihydroneopterin 3'-triphosphate + formate + H(+). Its pathway is cofactor biosynthesis; 7,8-dihydroneopterin triphosphate biosynthesis; 7,8-dihydroneopterin triphosphate from GTP: step 1/1. This Aeromonas salmonicida (strain A449) protein is GTP cyclohydrolase 1.